A 231-amino-acid polypeptide reads, in one-letter code: Small ribosomal subunit protein uS2c (231 aa).

The protein belongs to the universal ribosomal protein uS2 family.

Its subcellular location is the plastid. It localises to the chloroplast. The protein is Small ribosomal subunit protein uS2c (rps2) of Gracilaria tenuistipitata var. liui (Red alga).